A 433-amino-acid polypeptide reads, in one-letter code: Chaperone SurA (433 aa).

The N-terminal stretch at 1 to 24 is a signal peptide; sequence MKYRIKALLLASSLIITTITSVQA. PpiC domains are found at residues 175–276 and 285–384; these read NVEY…KVLD and VEEV…KLED.

The protein localises to the periplasm. It catalyses the reaction [protein]-peptidylproline (omega=180) = [protein]-peptidylproline (omega=0). Its function is as follows. Chaperone involved in the correct folding and assembly of outer membrane proteins. Recognizes specific patterns of aromatic residues and the orientation of their side chains, which are found more frequently in integral outer membrane proteins. May act in both early periplasmic and late outer membrane-associated steps of protein maturation. This chain is Chaperone SurA, found in Colwellia psychrerythraea (strain 34H / ATCC BAA-681) (Vibrio psychroerythus).